The following is a 658-amino-acid chain: DNA-binding protein Rfx5 (658 aa).

The span at 1-10 (MAEDKPDAKS) shows a compositional bias: basic and acidic residues. Positions 1–28 (MAEDKPDAKSPKTGARPQGGADAGEPTT) are disordered. The residue at position 2 (Ala-2) is an N-acetylalanine. Ser-10 is subject to Phosphoserine. The segment at 24 to 89 (GEPTTLLQRL…PSLLSNEEYM (66 aa)) is N-terminal domain. Residues 61–65 (LYLYL) are leucine-rich region; critical for dimer formation and for interaction with RFXAP. A DNA-binding region (RFX-type winged-helix) is located at residues 91 to 167 (AYRWIRNHLE…YCYSGIRRKT (77 aa)). A PxLPxI/L motif; mediates interaction with RFXANK motif is present at residues 172–177 (PPLPGL). At Ser-184 the chain carries Phosphoserine. 4 disordered regions span residues 250–315 (LAEE…SSVP), 382–422 (AGPG…GLGA), 443–602 (VPPR…DKIP), and 624–658 (KGEA…ATPP). Residues 277 to 309 (GPKKPERPAQPPKEQEARAGTDLPGRAERKKSV) are compositionally biased toward basic and acidic residues. 2 stretches are compositionally biased toward gly residues: residues 382–398 (AGPG…GPGP) and 406–422 (PGLG…GLGA). Composition is skewed to basic and acidic residues over residues 465–476 (PRPHDKGIKRTA) and 489–498 (PVKEMKHETQ). Basic residues predominate over residues 506 to 516 (KRKRGRPRKKP). Residues 648–658 (PEHKDPKATPP) are compositionally biased toward basic and acidic residues.

The protein belongs to the RFX family. Homodimer. The RFX heterotetrameric complex consists of 2 molecules of RFX5 and one each of RFXAP and RFX-B/RFXANK; with each subunit representing a separate complementation group. Interacts (via PxLPxI/L motif) with RFXANK (via ankyrin repeats); the interaction is direct. RFX forms cooperative DNA binding complexes with X2BP and CBF/NF-Y. RFX associates with CIITA to form an active transcriptional complex. Phosphorylated.

It is found in the nucleus. Its function is as follows. Activates transcription from class II MHC promoters. Recognizes X-boxes. Mediates cooperative binding between RFX and NF-Y. RFX binds the X1 box of MHC-II promoters. The protein is DNA-binding protein Rfx5 (Rfx5) of Mus musculus (Mouse).